The following is a 210-amino-acid chain: Somatotropin (210 aa).

Positions M1–A22 are cleaved as a signal peptide. H38 lines the Zn(2+) pocket. An intrachain disulfide couples C71 to C183. Zn(2+) is bound at residue E192. C200 and C208 are oxidised to a cystine.

Belongs to the somatotropin/prolactin family.

The protein resides in the secreted. Functionally, growth hormone plays an important role in growth control and is involved in the regulation of several anabolic processes. Implicated as an osmoregulatory substance important for seawater adaptation. The sequence is that of Somatotropin (gh) from Oncorhynchus masou (Cherry salmon).